Reading from the N-terminus, the 468-residue chain is MESRWVLHLDMDAFFASVEQLTRPTLRGRPVLVGGLGGRGVVAGASYEARAYGARSAMPMHQARRLIGVTAVVLPPRGVVYGIASRRVFDTVRGLVPVVEQLSFDEAFAEPPQLAGAVAEDVETFCERLRRRVRDETGLIASVGAGSGKQIAKIASGLAKPDGIRVVRHAEEQALLSGLPVRRLWGIGPVAEEKLHRLGIETIGQLAALSDAEAANILGATIGPALHRLARGIDDRPVVERAEAKQISAESTFAVDLTTMEQLHEAIDSIAEHAHQRLLRDGRGARTITVKLKKSDMSTLTRSATMPYPTTDAGALFTVARRLLPDPLQIGPIRLLGVGFSGLSDIRQESLFADSDLTQETAAAHYVETPGAVVPAAHDATMWRVGDDVAHPELGHGWVQGAGHGVVTVRFETRGSGPGSARTFPVDTGDISNASPLDSLDWPDYIGQLSVEGSAGASAPTVDDVGDR.

A UmuC domain is found at 6–188 (VLHLDMDAFF…LPVRRLWGIG (183 aa)). Mg(2+) contacts are provided by D10 and D105. E106 is an active-site residue.

It belongs to the DNA polymerase type-Y family. In terms of assembly, monomer. The cofactor is Mg(2+).

The protein localises to the cytoplasm. The enzyme catalyses DNA(n) + a 2'-deoxyribonucleoside 5'-triphosphate = DNA(n+1) + diphosphate. In terms of biological role, poorly processive, error-prone DNA polymerase involved in untargeted mutagenesis. Copies undamaged DNA at stalled replication forks, which arise in vivo from mismatched or misaligned primer ends. These misaligned primers can be extended by PolIV. Exhibits no 3'-5' exonuclease (proofreading) activity. May be involved in translesional synthesis, in conjunction with the beta clamp from PolIII. This is DNA polymerase IV 1 (dinB1) from Mycobacterium tuberculosis (strain CDC 1551 / Oshkosh).